Consider the following 173-residue polypeptide: Adenine phosphoribosyltransferase (173 aa).

This sequence belongs to the purine/pyrimidine phosphoribosyltransferase family. As to quaternary structure, homodimer.

Its subcellular location is the cytoplasm. It carries out the reaction AMP + diphosphate = 5-phospho-alpha-D-ribose 1-diphosphate + adenine. It participates in purine metabolism; AMP biosynthesis via salvage pathway; AMP from adenine: step 1/1. In terms of biological role, catalyzes a salvage reaction resulting in the formation of AMP, that is energically less costly than de novo synthesis. This chain is Adenine phosphoribosyltransferase, found in Thermotoga maritima (strain ATCC 43589 / DSM 3109 / JCM 10099 / NBRC 100826 / MSB8).